Reading from the N-terminus, the 406-residue chain is Putative phosphate permease PH0640 (406 aa).

Helical transmembrane passes span 2–22, 45–65, 83–103, 114–134, 140–160, 182–202, 207–227, 265–285, 288–308, 330–350, and 385–405; these read IPID…AWAI, AVLI…KTVT, VLIY…IIAT, SIIG…IVNW, VVLS…LVFR, FWIG…VLHG, IGIL…TSML, VANA…GLAG, VPVP…GVAT, FTID…GMPI, and FVTV…LLLI.

The protein belongs to the inorganic phosphate transporter (PiT) (TC 2.A.20) family.

It is found in the cell membrane. Potential transporter for phosphate. The chain is Putative phosphate permease PH0640 from Pyrococcus horikoshii (strain ATCC 700860 / DSM 12428 / JCM 9974 / NBRC 100139 / OT-3).